Here is a 90-residue protein sequence, read N- to C-terminus: Acylphosphatase (90 aa).

One can recognise an Acylphosphatase-like domain in the interval 3-90 (QRQFTVYGCV…RVFSDFTIER (88 aa)). Active-site residues include R18 and N36.

The protein belongs to the acylphosphatase family.

It catalyses the reaction an acyl phosphate + H2O = a carboxylate + phosphate + H(+). The protein is Acylphosphatase (acyP) of Actinobacillus succinogenes (strain ATCC 55618 / DSM 22257 / CCUG 43843 / 130Z).